The primary structure comprises 673 residues: Protein transport Sec1a (673 aa).

Residues 538–591 (SSHKEESEARTGSVRKSSAPTAVPERKATPHSMRSRRTATWARPHSSDDGYSSD) form a disordered region.

Belongs to the STXBP/unc-18/SEC1 family. As to quaternary structure, does not bind the syntaxin KNOLLE.

Involved in the vesicle trafficking. Binds syntaxins. In Arabidopsis thaliana (Mouse-ear cress), this protein is Protein transport Sec1a (SEC1A).